Consider the following 414-residue polypeptide: Serine/threonine transporter SstT (414 aa).

Over 2-15 (TTQRSPGLFRRLAH) the chain is Cytoplasmic. Residues 16–36 (GSLVKQILVGLVLGILLAWIS) form a helical membrane-spanning segment. At 37 to 45 (KPAAEAVGL) the chain is on the periplasmic side. Residues 46–66 (LGTLFVGALKAVAPILVLMLV) traverse the membrane as a helical segment. Topologically, residues 67–83 (MASIANHQHGQKTNIRP) are cytoplasmic. Residues 84–104 (ILFLYLLGTFSAALAAVVFSF) form a helical membrane-spanning segment. The Periplasmic segment spans residues 105 to 142 (AFPSTLHLSSSAGDISPPSGIVEVMRGLVMSMVSNPID). A helical transmembrane segment spans residues 143–163 (ALLKGNYIGILVWAIGLGFAL). Over 164 to 179 (RHGNETTKNLVNDMSN) the chain is Cytoplasmic. A helical transmembrane segment spans residues 180–200 (AVTFMVKLVIRFAPFGIFGLV). Over 201 to 217 (SSTLATTGFSTLWGYAQ) the chain is Periplasmic. Residues 218-238 (LLVVLVGCMLLVALVVNPLLV) traverse the membrane as a helical segment. At 239–299 (WWKIRRNPFP…VSIPLGATIN (61 aa)) the chain is on the cytoplasmic side. The helical transmembrane segment at 300 to 320 (MAGAAITITVLTLAAVNTLGI) threads the bilayer. The Periplasmic segment spans residues 321–331 (PVDLPTALLLS). Residues 332–352 (VVASLCACGASGVAGGSLLLI) traverse the membrane as a helical segment. Residues 353 to 414 (PLACNMFGIS…DRLANSALRN (62 aa)) are Cytoplasmic-facing.

Belongs to the dicarboxylate/amino acid:cation symporter (DAACS) (TC 2.A.23) family.

Its subcellular location is the cell inner membrane. The enzyme catalyses L-serine(in) + Na(+)(in) = L-serine(out) + Na(+)(out). The catalysed reaction is L-threonine(in) + Na(+)(in) = L-threonine(out) + Na(+)(out). Involved in the import of serine and threonine into the cell, with the concomitant import of sodium (symport system). The polypeptide is Serine/threonine transporter SstT (Shigella flexneri).